A 240-amino-acid polypeptide reads, in one-letter code: UPF0502 protein Veis_2102 (240 aa).

Belongs to the UPF0502 family.

In Verminephrobacter eiseniae (strain EF01-2), this protein is UPF0502 protein Veis_2102.